Reading from the N-terminus, the 265-residue chain is Capsule polysaccharide export inner-membrane protein CtrC (265 aa).

The next 6 membrane-spanning stretches (helical) occupy residues Ile-37–Trp-57, Asn-64–Trp-84, Ile-121–Ile-141, Ile-147–Val-167, Phe-178–Phe-198, and Asn-236–Ala-256. Residues Ile-37–Phe-258 enclose the ABC transmembrane type-2 domain.

Belongs to the ABC-2 integral membrane protein family.

It is found in the cell inner membrane. Its function is as follows. May form an ATP-driven capsule polysaccharide export apparatus, in association with the CtrB and CtrD proteins. The protein is Capsule polysaccharide export inner-membrane protein CtrC (ctrC) of Neisseria meningitidis serogroup A / serotype 4A (strain DSM 15465 / Z2491).